Here is a 220-residue protein sequence, read N- to C-terminus: CDP-diacylglycerol--inositol 3-phosphatidyltransferase (220 aa).

At 1–20 (MSSNSTPEKVTAEHVLWYIP) the chain is on the cytoplasmic side. The chain crosses the membrane as a helical span at residues 21-41 (NKIGYVRVITAALSFFVMKNH). The Lumenal portion of the chain corresponds to 42-45 (PTAF). A helical membrane pass occupies residues 46–66 (TWLYSTSCLLDALDGTMARKY). Mg(2+)-binding residues include D56 and D59. Residues G60, R64, and S70 each coordinate a CDP-1,2-diacyl-sn-glycerol. Residues 67-75 (NQVSSLGAV) are Cytoplasmic-facing. Residues 76–96 (LDMVTDRSSTAGLMCFLCVQY) traverse the membrane as a helical segment. Mg(2+) contacts are provided by D77 and D81. D81 functions as the Proton acceptor in the catalytic mechanism. The Lumenal portion of the chain corresponds to 97–98 (PQ). A helical membrane pass occupies residues 99–119 (WCVFFQLMLGLDITSHYMHMY). Residues 120-145 (ASLSAGKTSHKSVGEGESRLLHLYYT) are Cytoplasmic-facing. Residues 146-166 (RRDVLFTICAFNELFYAGLYL) traverse the membrane as a helical segment. Topologically, residues 167 to 170 (QLFS) are lumenal. A helical membrane pass occupies residues 171–191 (NSATFGKWTTIISFPGYVFKQ). Residues 192 to 220 (TANVVQLKRAALILADNDAKNANEKNKTY) lie on the Cytoplasmic side of the membrane.

Belongs to the CDP-alcohol phosphatidyltransferase class-I family. Mn(2+) serves as cofactor. It depends on Mg(2+) as a cofactor.

The protein localises to the microsome membrane. It localises to the endoplasmic reticulum membrane. It is found in the golgi apparatus membrane. Its subcellular location is the mitochondrion outer membrane. The catalysed reaction is a CDP-1,2-diacyl-sn-glycerol + myo-inositol = a 1,2-diacyl-sn-glycero-3-phospho-(1D-myo-inositol) + CMP + H(+). Its function is as follows. Catalyzes the synthesis of phosphatidylinositol (PtdIns). In Saccharomyces cerevisiae (strain ATCC 204508 / S288c) (Baker's yeast), this protein is CDP-diacylglycerol--inositol 3-phosphatidyltransferase.